Consider the following 141-residue polypeptide: MAITVHCDIVSAEAEIFSGLVEMVIAHGALGDLGIAPGHAPLITDLKPGPIRLVKQGGEQEVYYISGGFLEVQPNMVKVLADTVVRAGDLDEAAAQEALKAAEKALQGKGAEFDYSAAAARLAEAAAQLRTVQQLRKKFGG.

It belongs to the ATPase epsilon chain family. In terms of assembly, F-type ATPases have 2 components, CF(1) - the catalytic core - and CF(0) - the membrane proton channel. CF(1) has five subunits: alpha(3), beta(3), gamma(1), delta(1), epsilon(1). CF(0) has three main subunits: a, b and c.

It localises to the cell inner membrane. In terms of biological role, produces ATP from ADP in the presence of a proton gradient across the membrane. The protein is ATP synthase epsilon chain of Pseudomonas aeruginosa (strain LESB58).